The primary structure comprises 228 residues: FAS1 domain-containing protein NCU02579 (228 aa).

The N-terminal stretch at 1-18 (MRFTPYLVLAPTAAVAFA) is a signal peptide. A disordered region spans residues 50–74 (PAVGLGPAMPPSGAPQADGPANAGG). Positions 77 to 225 (SVMLSDVMGR…GEVWILKGVR (149 aa)) constitute an FAS1 domain.

The protein localises to the vacuole. The polypeptide is FAS1 domain-containing protein NCU02579 (Neurospora crassa (strain ATCC 24698 / 74-OR23-1A / CBS 708.71 / DSM 1257 / FGSC 987)).